Consider the following 209-residue polypeptide: NAD(P)H-quinone oxidoreductase subunit K 2 (209 aa).

4 residues coordinate [4Fe-4S] cluster: Cys-53, Cys-54, Cys-118, and Cys-149.

This sequence belongs to the complex I 20 kDa subunit family. NDH-1 can be composed of about 15 different subunits; different subcomplexes with different compositions have been identified which probably have different functions. Requires [4Fe-4S] cluster as cofactor.

It localises to the cellular thylakoid membrane. The enzyme catalyses a plastoquinone + NADH + (n+1) H(+)(in) = a plastoquinol + NAD(+) + n H(+)(out). It catalyses the reaction a plastoquinone + NADPH + (n+1) H(+)(in) = a plastoquinol + NADP(+) + n H(+)(out). Functionally, NDH-1 shuttles electrons from an unknown electron donor, via FMN and iron-sulfur (Fe-S) centers, to quinones in the respiratory and/or the photosynthetic chain. The immediate electron acceptor for the enzyme in this species is believed to be plastoquinone. Couples the redox reaction to proton translocation, and thus conserves the redox energy in a proton gradient. Cyanobacterial NDH-1 also plays a role in inorganic carbon-concentration. The polypeptide is NAD(P)H-quinone oxidoreductase subunit K 2 (Acaryochloris marina (strain MBIC 11017)).